A 183-amino-acid chain; its full sequence is NADH-quinone oxidoreductase subunit B 2 (183 aa).

4 residues coordinate [4Fe-4S] cluster: Cys-47, Cys-48, Cys-113, and Cys-142.

Belongs to the complex I 20 kDa subunit family. As to quaternary structure, NDH-1 is composed of 14 different subunits. Subunits NuoB, C, D, E, F, and G constitute the peripheral sector of the complex. [4Fe-4S] cluster is required as a cofactor.

The protein localises to the cell inner membrane. The enzyme catalyses a quinone + NADH + 5 H(+)(in) = a quinol + NAD(+) + 4 H(+)(out). Functionally, NDH-1 shuttles electrons from NADH, via FMN and iron-sulfur (Fe-S) centers, to quinones in the respiratory chain. The immediate electron acceptor for the enzyme in this species is believed to be ubiquinone. Couples the redox reaction to proton translocation (for every two electrons transferred, four hydrogen ions are translocated across the cytoplasmic membrane), and thus conserves the redox energy in a proton gradient. This Anaeromyxobacter sp. (strain Fw109-5) protein is NADH-quinone oxidoreductase subunit B 2.